The chain runs to 448 residues: Phosphoglucosamine mutase (448 aa).

Residue Ser104 is the Phosphoserine intermediate of the active site. Mg(2+) is bound by residues Ser104, Asp241, Asp243, and Asp245. Ser104 carries the phosphoserine modification.

The protein belongs to the phosphohexose mutase family. Requires Mg(2+) as cofactor. In terms of processing, activated by phosphorylation.

It catalyses the reaction alpha-D-glucosamine 1-phosphate = D-glucosamine 6-phosphate. Catalyzes the conversion of glucosamine-6-phosphate to glucosamine-1-phosphate. This is Phosphoglucosamine mutase from Nocardioides sp. (strain ATCC BAA-499 / JS614).